The following is a 226-amino-acid chain: HTH-type transcriptional regulator Rv0324 (226 aa).

One can recognise an HTH arsR-type domain in the interval 7-101 (RKAALLDQVA…LVQVVADEHL (95 aa)). Positions 41 to 64 (VEAIATATGMNLTTASANLQALKS) form a DNA-binding region, H-T-H motif. A Rhodanese domain is found at 129-218 (EAGEVTLVDV…WRLAGLPVDE (90 aa)). Cysteine 177 acts as the Cysteine persulfide intermediate in catalysis.

Part of a regulatory network that coordinates tolerance to the antitubercular drug bedaquiline. The sequence is that of HTH-type transcriptional regulator Rv0324 from Mycobacterium tuberculosis (strain ATCC 25618 / H37Rv).